The primary structure comprises 3898 residues: Genome polyprotein (3898 aa).

A Peptidase C53 domain is found at Met-1–Cys-168. Disordered regions lie at residues Leu-47 to Gly-72, Lys-172 to Asp-209, and Lys-223 to Glu-245. Residues His-49 and Cys-69 each act as for N-terminal protease activity in the active site. Residues Lys-172 to Pro-207 are compositionally biased toward basic and acidic residues. Residues Asn-272, Asn-281, Asn-296, and Asn-335 are each glycosylated (N-linked (GlcNAc...) asparagine; by host). 2 cysteine pairs are disulfide-bonded: Cys-308/Cys-352 and Cys-338/Cys-339. Catalysis depends on for E(rns) glycoprotein RNase activity residues His-344, Glu-345, Lys-348, and His-349. Residues Asn-365 and Asn-370 are each glycosylated (N-linked (GlcNAc...) asparagine; by host). Intrachain disulfides connect Cys-380–Cys-425 and Cys-384–Cys-408. Residues Asn-413, Asn-487, and Asn-597 are each glycosylated (N-linked (GlcNAc...) asparagine; by host). The Lumenal segment spans residues Ala-498–Leu-666. A helical transmembrane segment spans residues Val-667 to Ile-687. Topologically, residues Thr-688–Ser-1035 are lumenal. 2 disulfides stabilise this stretch: Cys-696–Cys-740 and Cys-751–Cys-798. Residues Asn-809, Asn-878, Asn-922, and Asn-990 are each glycosylated (N-linked (GlcNAc...) asparagine; by host). 8 helical membrane-spanning segments follow: residues Ile-1036–Tyr-1056, Asn-1079–Leu-1099, Val-1108–Leu-1128, Leu-1144–Ala-1164, Pro-1189–Thr-1209, Trp-1217–Leu-1237, Ile-1247–Thr-1267, and Val-1281–Leu-1301. Asn-1357 is a glycosylation site (N-linked (GlcNAc...) asparagine; by host). A helical transmembrane segment spans residues Met-1360–Ile-1380. Asn-1419 carries N-linked (GlcNAc...) asparagine; by host glycosylation. A Peptidase C74 domain is found at Arg-1441–Arg-1589. His-1447 functions as the For cysteine protease NS2 activity in the catalytic mechanism. The N-linked (GlcNAc...) asparagine; by host glycan is linked to Asn-1451. Active-site for cysteine protease NS2 activity residues include Glu-1461 and Cys-1512. The chain crosses the membrane as a helical span at residues Met-1568–Leu-1588. The Peptidase S31 domain occupies Gly-1590–Arg-1763. Residues His-1658 and Asp-1695 each act as charge relay system; for serine protease NS3 activity in the active site. An N-linked (GlcNAc...) asparagine; by host glycan is attached at Asn-1713. Ser-1752 functions as the Charge relay system; for serine protease NS3 activity in the catalytic mechanism. Positions Ile-1802–Ala-1960 constitute a Helicase ATP-binding domain. Leu-1815–Thr-1822 contributes to the ATP binding site. The short motif at Asp-1910–His-1913 is the DEAH box element. In terms of domain architecture, Helicase C-terminal spans Gly-1978–Asn-2143. Residues Asn-2134, Asn-2217, Asn-2494, Asn-2682, Asn-2751, Asn-2891, and Asn-2988 are each glycosylated (N-linked (GlcNAc...) asparagine; by host). GTP-binding residues include Thr-3499 and Leu-3501. In terms of domain architecture, RdRp catalytic spans Pro-3518–Phe-3641. Asn-3688 carries an N-linked (GlcNAc...) asparagine; by host glycan. GTP contacts are provided by Arg-3696 and Lys-3704. Asn-3777 and Asn-3793 each carry an N-linked (GlcNAc...) asparagine; by host glycan.

This sequence belongs to the pestivirus polyprotein family. Homodimer; disulfide-linked. As to quaternary structure, homodimer; disulfide-linked. Heterodimer with E1; disulfide-linked. In terms of assembly, interacts with host IFIH1/MDA5; this interaction is involved in the inhibition of IFN-beta production. In terms of processing, heavily glycosylated. The viral RNA of pestiviruses is expressed as a single polyprotein which undergoes post-translational proteolytic processing resulting in the production of at least eleven individual proteins. The N-terminal protease cleaves itself from the nascent polyprotein autocatalytically and thereby generates the N-terminus of the adjacent viral capsid protein C. Post-translationally, cleavage between E2 and p7 is partial.

Its subcellular location is the virion. The protein localises to the host membrane. It localises to the virion membrane. The protein resides in the host endoplasmic reticulum membrane. It is found in the host cytoplasm. It carries out the reaction Leu is conserved at position P1 for all four cleavage sites. Alanine is found at position P1' of the NS4A-NS4B cleavage site, whereas serine is found at position P1' of the NS3-NS4A, NS4B-NS5A and NS5A-NS5B cleavage sites.. It catalyses the reaction RNA(n) + a ribonucleoside 5'-triphosphate = RNA(n+1) + diphosphate. The catalysed reaction is a ribonucleoside 5'-triphosphate + H2O = a ribonucleoside 5'-diphosphate + phosphate + H(+). The enzyme catalyses ATP + H2O = ADP + phosphate + H(+). It carries out the reaction a ribonucleotidyl-ribonucleotide-RNA + H2O = a 3'-end 3'-phospho-ribonucleotide-RNA + a 5'-end dephospho-ribonucleoside-RNA + H(+). It catalyses the reaction a ribonucleotidyl-ribonucleotide-RNA = a 3'-end 2',3'-cyclophospho-ribonucleotide-RNA + a 5'-end dephospho-ribonucleoside-RNA. The catalysed reaction is a 3'-end 2',3'-cyclophospho-ribonucleotide-RNA + H2O = a 3'-end 3'-phospho-ribonucleotide-RNA + H(+). Inhibited by Zn(2+), which binds the catalytic site. In terms of biological role, leader cysteine autoprotease that cleaves itself from the nascent polyprotein during translation of the viral mRNA. Once released, plays a role in the inhibition of host innate immune response by interacting with host IRF3 and inducing its proteasomal degradation. Packages viral RNA to form a viral nucleocapsid and thereby protects viral RNA. Also plays a role in transcription regulation. Protects the incoming virus against IFN-induced effectors. Functionally, initial binding to target cell probably involves interaction of E(rns) with glycosaminoglycans. Also possesses intrinsic ribonuclease (RNase) activity that can inhibit the production of type I interferon and assist in the development of persistent infections. Its function is as follows. E1 and/or E2 are probably responsible of cell attachment with CD46 and subsequent fusion after internalization of the virion by endocytosis. In terms of biological role, E1 and/or E2 are probably responsible of cell attachment with CD46 and subsequent fusion after internalization of the virion by endocytosis. Probably functions as a coeffector of fusion providing structural integrity to the fusion complex and possibly controlling exposure of the fusion motif in E1. Plays an essential role in the virus replication cycle by acting as a viroporin. Forms ion conductive pores, which alters the cell permeability allowing the transport of ions and other small molecules. Forms a leader sequence to properly orient NS2 in the membrane. Functionally, uncleaved NS2-3 is required for production of infectious virus. Its function is as follows. Plays a role in the regulation of viral RNA replication. In terms of biological role, multifunctional protein that contains an N-terminal protease and a C-terminal helicase, playing essential roles in viral polyprotein processing and viral genome replication. The chymotrypsin-like serine protease activity utilizes NS4A as an essential cofactor and catalyzes the cleavage of the polyprotein leading to the release of NS4A, NS4B, NS5A, and NS5B. Interacts with NS5B to enhance RNA-dependent RNA polymerase activity. Acts as a cofactor for the NS3 protease activity. Functionally, induces a specific membrane alteration that serves as a scaffold for the virus replication complex. Plays a role in the inhibition of host innate immune response by inhibiting RIGI/IFIH1-mediated IFN-beta production. Its function is as follows. Replicates the viral (+) and (-) genome. Initiates the primer-independent RNA replication via a de novo mechanism requiring GTP. The polypeptide is Genome polyprotein (Bos taurus (Bovine)).